The following is a 247-amino-acid chain: 3-deoxy-manno-octulosonate cytidylyltransferase (247 aa).

It belongs to the KdsB family.

The protein localises to the cytoplasm. The enzyme catalyses 3-deoxy-alpha-D-manno-oct-2-ulosonate + CTP = CMP-3-deoxy-beta-D-manno-octulosonate + diphosphate. The protein operates within nucleotide-sugar biosynthesis; CMP-3-deoxy-D-manno-octulosonate biosynthesis; CMP-3-deoxy-D-manno-octulosonate from 3-deoxy-D-manno-octulosonate and CTP: step 1/1. Its pathway is bacterial outer membrane biogenesis; lipopolysaccharide biosynthesis. Functionally, activates KDO (a required 8-carbon sugar) for incorporation into bacterial lipopolysaccharide in Gram-negative bacteria. The protein is 3-deoxy-manno-octulosonate cytidylyltransferase of Methylobacterium nodulans (strain LMG 21967 / CNCM I-2342 / ORS 2060).